The chain runs to 319 residues: Lipoyl synthase (319 aa).

The interval 5 to 31 (LDTISANPVRPRHPEKANRPDALSPPK) is disordered. Residues C61, C66, C72, C87, C91, C94, and S300 each coordinate [4Fe-4S] cluster. The Radical SAM core domain maps to 73–289 (WDKKHATFMI…ETVAYTKGFL (217 aa)).

It belongs to the radical SAM superfamily. Lipoyl synthase family. The cofactor is [4Fe-4S] cluster.

The protein resides in the cytoplasm. It carries out the reaction [[Fe-S] cluster scaffold protein carrying a second [4Fe-4S](2+) cluster] + N(6)-octanoyl-L-lysyl-[protein] + 2 oxidized [2Fe-2S]-[ferredoxin] + 2 S-adenosyl-L-methionine + 4 H(+) = [[Fe-S] cluster scaffold protein] + N(6)-[(R)-dihydrolipoyl]-L-lysyl-[protein] + 4 Fe(3+) + 2 hydrogen sulfide + 2 5'-deoxyadenosine + 2 L-methionine + 2 reduced [2Fe-2S]-[ferredoxin]. It participates in protein modification; protein lipoylation via endogenous pathway; protein N(6)-(lipoyl)lysine from octanoyl-[acyl-carrier-protein]: step 2/2. Functionally, catalyzes the radical-mediated insertion of two sulfur atoms into the C-6 and C-8 positions of the octanoyl moiety bound to the lipoyl domains of lipoate-dependent enzymes, thereby converting the octanoylated domains into lipoylated derivatives. The protein is Lipoyl synthase of Nitrobacter winogradskyi (strain ATCC 25391 / DSM 10237 / CIP 104748 / NCIMB 11846 / Nb-255).